The following is a 41-amino-acid chain: Large ribosomal subunit protein bL36 (41 aa).

The disordered stretch occupies residues 1 to 21 (MKIRNSLKSLRGRHRDNQLVR).

Belongs to the bacterial ribosomal protein bL36 family.

The protein is Large ribosomal subunit protein bL36 of Methylobacterium sp. (strain 4-46).